Consider the following 441-residue polypeptide: Glutamate-1-semialdehyde 2,1-aminomutase (441 aa).

The residue at position 276 (lysine 276) is an N6-(pyridoxal phosphate)lysine.

The protein belongs to the class-III pyridoxal-phosphate-dependent aminotransferase family. HemL subfamily. Homodimer. It depends on pyridoxal 5'-phosphate as a cofactor.

It is found in the cytoplasm. The catalysed reaction is (S)-4-amino-5-oxopentanoate = 5-aminolevulinate. It participates in porphyrin-containing compound metabolism; protoporphyrin-IX biosynthesis; 5-aminolevulinate from L-glutamyl-tRNA(Glu): step 2/2. This chain is Glutamate-1-semialdehyde 2,1-aminomutase, found in Rhodococcus jostii (strain RHA1).